Reading from the N-terminus, the 65-residue chain is Large ribosomal subunit protein bL32 (65 aa).

Belongs to the bacterial ribosomal protein bL32 family.

In Tropheryma whipplei (strain TW08/27) (Whipple's bacillus), this protein is Large ribosomal subunit protein bL32.